We begin with the raw amino-acid sequence, 341 residues long: Anthranilate phosphoribosyltransferase (341 aa).

5-phospho-alpha-D-ribose 1-diphosphate is bound by residues glycine 82, 85–86 (GD), threonine 90, 92–95 (NIST), 110–118 (KHGGRSVSG), and serine 122. Residue glycine 82 coordinates anthranilate. Residue serine 94 coordinates Mg(2+). Position 168 (arginine 168) interacts with anthranilate. Residues aspartate 227 and glutamate 228 each contribute to the Mg(2+) site.

This sequence belongs to the anthranilate phosphoribosyltransferase family. As to quaternary structure, homodimer. The cofactor is Mg(2+).

It catalyses the reaction N-(5-phospho-beta-D-ribosyl)anthranilate + diphosphate = 5-phospho-alpha-D-ribose 1-diphosphate + anthranilate. It participates in amino-acid biosynthesis; L-tryptophan biosynthesis; L-tryptophan from chorismate: step 2/5. Its function is as follows. Catalyzes the transfer of the phosphoribosyl group of 5-phosphorylribose-1-pyrophosphate (PRPP) to anthranilate to yield N-(5'-phosphoribosyl)-anthranilate (PRA). The polypeptide is Anthranilate phosphoribosyltransferase (Nitrosomonas europaea (strain ATCC 19718 / CIP 103999 / KCTC 2705 / NBRC 14298)).